A 1893-amino-acid chain; its full sequence is Transcription initiation factor TFIID subunit 1 (1893 aa).

The Protein kinase 1 domain occupies 1–435 (MGPGCDLLLR…VTQLHWEDDI (435 aa)). A Phosphoserine; by autocatalysis modification is found at serine 137. Disordered stretches follow at residues 155-184 (LMPP…NGEG) and 197-224 (ASEK…AESE). The span at 156-165 (MPPPPPPPGP) shows a compositional bias: pro residues. Residues 197–208 (ASEKVDFSSSSD) show a composition bias toward low complexity. Serine 328 bears the Phosphoserine; by autocatalysis mark. The segment at 534–557 (IPDEKEEATSNSPSKESKKESSLK) is disordered. A histone acetyltransferase (HAT) region spans residues 538 to 997 (KEEATSNSPS…KIPNKPTQQK (460 aa)). Lysine 565 bears the N6-acetyllysine mark. Residues lysine 570 and lysine 583 each participate in a glycyl lysine isopeptide (Lys-Gly) (interchain with G-Cter in SUMO2) cross-link. Disordered regions lie at residues 990–1009 (PNKP…KKTV), 1128–1148 (MLQN…QERK), 1158–1177 (GSAA…VTSL), and 1254–1278 (RLKR…MKER). Composition is skewed to basic and acidic residues over residues 995–1004 (QQKDDKEPQP) and 1139–1148 (SREREEQERK). A DNA-binding region (HMG box; involved in promoter binding) is located at residues 1216–1294 (VRIRTTKDEE…CGACGAIGHM (79 aa)). Over residues 1254–1270 (RLKRNQEKEKLKGPPEK) the composition is skewed to basic and acidic residues. Residues 1363-1650 (VLKFPKQQLP…TAKEAALEEA (288 aa)) form an interaction with ASF1A and ASF1B region. The Nuclear localization signal motif lies at 1372-1379 (PPKKKRRV). 2 Bromo domains span residues 1397 to 1505 (RRRT…LKEK) and 1519 to 1628 (LLDD…LTEY). The Protein kinase 2 domain maps to 1446 to 1893 (MDLQTLRENV…AGDSDLDSDE (448 aa)). Residues 1651–1676 (ELESLDPMTPGPYTPQPPDLYDTNTS) form a disordered region. The segment covering 1659 to 1668 (TPGPYTPQPP) has biased composition (pro residues). Phosphoserine is present on residues serine 1690, serine 1693, alanine 1718, glutamate 1721, and glycine 1723. The tract at residues 1696–1893 (DIPSATPEKQ…AGDSDLDSDE (198 aa)) is disordered. Acidic residues-rich tracts occupy residues 1709 to 1723 (EGED…EEEG) and 1741 to 1756 (EGED…EEGD). Residues serine 1799, serine 1802, and serine 1820 each carry the phosphoserine modification. The span at 1830–1840 (KSNTQDTSFSS) shows a compositional bias: polar residues. Acidic residues predominate over residues 1846-1857 (VSEEEEDEEEEE). Residue serine 1847 is modified to Phosphoserine. The span at 1860 to 1869 (SGPSVLSQVH) shows a compositional bias: polar residues.

The protein belongs to the TAF1 family. As to quaternary structure, component of the TFIID basal transcription factor complex, composed of TATA-box-binding protein TBP, and a number of TBP-associated factors (TAFs), including TAF1, TAF2, TAF3, TAF4, TAF5, TAF6, TAF7, TAF8, TAF9, TAF10, TAF11, TAF12 and TAF13. Interacts with TAF7; the interaction is direct. TAF1, when part of the TFIID complex, interacts with C-terminus of TP53. Part of a TFIID-containing RNA polymerase II pre-initiation complex that is composed of TBP and at least GTF2A1, GTF2A2, GTF2E1, GTF2E2, GTF2F1, GTF2H2, GTF2H3, GTF2H4, GTF2H5, GTF2B, TCEA1, ERCC2, ERCC3, TAF1, TAF2, TAF3, TAF4, TAF5, TAF6, TAF7, TAF8, TAF9, TAF10, TAF11, TAF12 and TAF13. Component of some MLL1/MLL complex, at least composed of the core components KMT2A/MLL1, ASH2L, HCFC1/HCF1, WDR5 and RBBP5, as well as the facultative components BACC1, CHD8, E2F6, HSP70, INO80C, KANSL1, LAS1L, MAX, MCRS1, MGA, KAT8/MOF, PELP1, PHF20, PRP31, RING2, RUVB1/TIP49A, RUVB2/TIP49B, SENP3, TAF1, TAF4, TAF6, TAF7, TAF9 and TEX10. RB1 interacts with the N-terminal domain of TAF1. Interacts with ASF1A and ASF1B. Interacts (via bromo domains) with acetylated lysine residues on the N-terminus of histone H1.4, H2A, H2B, H3 and H4 (in vitro). In terms of assembly, (Microbial infection) Interacts with SV40 Large T antigen. (Microbial infection) Interacts with herpes simplex virus 1 ICP4. Mg(2+) is required as a cofactor. Post-translationally, phosphorylated by casein kinase II in vitro.

Its subcellular location is the nucleus. It catalyses the reaction L-seryl-[protein] + ATP = O-phospho-L-seryl-[protein] + ADP + H(+). The enzyme catalyses L-threonyl-[protein] + ATP = O-phospho-L-threonyl-[protein] + ADP + H(+). The catalysed reaction is L-lysyl-[protein] + acetyl-CoA = N(6)-acetyl-L-lysyl-[protein] + CoA + H(+). Autophosphorylates on Ser residues. Inhibited by retinoblastoma tumor suppressor protein, RB1. Binding to TAF7 or CIITA inhibits the histone acetyltransferase activity. The TFIID basal transcription factor complex plays a major role in the initiation of RNA polymerase II (Pol II)-dependent transcription. TFIID recognizes and binds promoters with or without a TATA box via its subunit TBP, a TATA-box-binding protein, and promotes assembly of the pre-initiation complex (PIC). The TFIID complex consists of TBP and TBP-associated factors (TAFs), including TAF1, TAF2, TAF3, TAF4, TAF5, TAF6, TAF7, TAF8, TAF9, TAF10, TAF11, TAF12 and TAF13. TAF1 is the largest component and core scaffold of the TFIID complex, involved in nucleating complex assembly. TAF1 forms a promoter DNA binding subcomplex of TFIID, together with TAF7 and TAF2. Contains novel N- and C-terminal Ser/Thr kinase domains which can autophosphorylate or transphosphorylate other transcription factors. Phosphorylates TP53 on 'Thr-55' which leads to MDM2-mediated degradation of TP53. Phosphorylates GTF2A1 and GTF2F1 on Ser residues. Possesses DNA-binding activity. Essential for progression of the G1 phase of the cell cycle. Exhibits histone acetyltransferase activity towards histones H3 and H4. The protein is Transcription initiation factor TFIID subunit 1 of Homo sapiens (Human).